Reading from the N-terminus, the 180-residue chain is Cytokinin-beta-glucosidase 1 (180 aa).

Hydrolyzes cytokinin glucosides thus liberating free cytokinins. The protein is Cytokinin-beta-glucosidase 1 (ROLC1) of Linaria vulgaris (Toadflax).